A 658-amino-acid chain; its full sequence is ATP-dependent DNA helicase Rep (658 aa).

One can recognise a UvrD-like helicase ATP-binding domain in the interval 1–280; the sequence is MSLNFNQKNA…IKMEQNYRSY (280 aa). ATP is bound by residues 22-29 and Arg278; that span reads AGAGSGKT. One can recognise a UvrD-like helicase C-terminal domain in the interval 281–564; it reads GRILKAANKL…QLMTLHSSKG (284 aa).

Belongs to the helicase family. UvrD subfamily. As to quaternary structure, homodimer.

The catalysed reaction is Couples ATP hydrolysis with the unwinding of duplex DNA by translocating in the 3'-5' direction.. It carries out the reaction ATP + H2O = ADP + phosphate + H(+). Rep helicase is a single-stranded DNA-dependent ATPase involved in DNA replication; it can initiate unwinding at a nick in the DNA. It binds to the single-stranded DNA and acts in a progressive fashion along the DNA in the 3' to 5' direction. In Buchnera aphidicola subsp. Schizaphis graminum (strain Sg), this protein is ATP-dependent DNA helicase Rep.